The sequence spans 423 residues: Acetylornithine aminotransferase, mitochondrial (423 aa).

The N-terminal 13 residues, methionine 1–arginine 13, are a transit peptide targeting the mitochondrion. The residue at position 276 (lysine 276) is an N6-(pyridoxal phosphate)lysine.

This sequence belongs to the class-III pyridoxal-phosphate-dependent aminotransferase family. Pyridoxal 5'-phosphate serves as cofactor.

It is found in the mitochondrion matrix. The enzyme catalyses N(2)-acetyl-L-ornithine + 2-oxoglutarate = N-acetyl-L-glutamate 5-semialdehyde + L-glutamate. Its pathway is amino-acid biosynthesis; L-arginine biosynthesis; N(2)-acetyl-L-ornithine from L-glutamate: step 4/4. Functionally, catalyzes the conversion of N-acetylglutamate-gamma-semialdehyde (NAGSA) to N-acetylornithine in arginine biosynthesis. The protein is Acetylornithine aminotransferase, mitochondrial (ARG8) of Saccharomyces cerevisiae (strain ATCC 204508 / S288c) (Baker's yeast).